Consider the following 459-residue polypeptide: MQIQFHLYNTLSRTKEVFNPQDQANVKMYVCGPTVYYNPHIGNSRSGVVYDLLYRIVIKIFGEKAVKYVRNITDVDDKIIDRAALLGVTIDELTDKVTKEFHKNMAYLGCMLPSIEPKATKHIDVMIAIIERLIAKDHAYIADNHVYFDVLSAPNYTELSNRNLEEMFEGVHVENSKTKKNPQDFVLWKPAKQNESANMNFESPWGLGRPGWHIECSAMSYKYLGENFDIHGGGADLIFPHHTNEIAQSRCAFPSSTYAKYWVHNGFLTVNGEKMSKSLGNFITVRDLMDKQIQGEVVRLFLLSSHYRRPLDYNDKAIEDAKKTLNYWYRAIENINVQKIDLPHDFMQSLLDDMNTPLAVKIINDYAKGVFISKTEEERQLNASAIITCANFIGLMNKTPNEWFNSGVDELYVNELVNKRLEAKKQKNWLLADQIRNQLLEEKIILEDRPDGTTIWRKE.

Cysteine 31 serves as a coordination point for Zn(2+). A 'HIGH' region motif is present at residues 33–43 (PTVYYNPHIGN). 3 residues coordinate Zn(2+): cysteine 216, histidine 241, and glutamate 245. Residues 274-278 (KMSKS) carry the 'KMSKS' region motif. Lysine 277 is an ATP binding site.

It belongs to the class-I aminoacyl-tRNA synthetase family. As to quaternary structure, monomer. Zn(2+) serves as cofactor.

It localises to the cytoplasm. It carries out the reaction tRNA(Cys) + L-cysteine + ATP = L-cysteinyl-tRNA(Cys) + AMP + diphosphate. The sequence is that of Cysteine--tRNA ligase from Rickettsia africae (strain ESF-5).